The following is a 460-amino-acid chain: Solute carrier family 52, riboflavin transporter, member 3 (460 aa).

Residues 1–6 (MAFLTH) are Cytoplasmic-facing. Residues 7 to 27 (LLVCVFGMGSWVAINGLWVEL) form a helical membrane-spanning segment. Over 28 to 37 (PLLVTELPEA) the chain is Extracellular. The helical transmembrane segment at 38–58 (WYLPSYLTVVIQLANIGPLLV) threads the bilayer. At 59 to 71 (TLMHRFRPGCLSE) the chain is on the cytoplasmic side. Residues 72–92 (VPVIFLILCVGTAACILLAFL) traverse the membrane as a helical segment. The Extracellular segment spans residues 93–105 (WNVTSWIQGGQHS). Residue asparagine 94 is glycosylated (N-linked (GlcNAc...) asparagine). The chain crosses the membrane as a helical span at residues 106–126 (VAFIVLTFFLALVDCTSSVTF). Residues 127–137 (LPFMSQLPTYY) lie on the Cytoplasmic side of the membrane. The helical transmembrane segment at 138 to 158 (LTTFFIGEGLSGLLPALVALV) threads the bilayer. Residues 159-211 (QGSGITTCVNVTETPGTTLNTMETPITQGNLSPSLPSPSWHQESRYLAPRFSP) are Extracellular-facing. N-linked (GlcNAc...) asparagine glycosylation is present at asparagine 168. The helical transmembrane segment at 212-232 (LLFFLLLSFLTGCCLVAFFLL) threads the bilayer. Over 233–291 (QRQPWGRQGSIEDLLHSQVTLHSIRPRDTEDTSSLGAPVSSPGKGSVEASVASLRPAQL) the chain is Cytoplasmic. Serine 242 and serine 266 each carry phosphoserine. Residues 292–312 (AFIYSVVAFVNALTNGVLPSV) form a helical membrane-spanning segment. Topologically, residues 313 to 326 (QTYSCLPYGPVAYH) are extracellular. Residues 327-347 (LSATLSSVASPLACFLPIFLP) traverse the membrane as a helical segment. Residues 348–350 (NRS) lie on the Cytoplasmic side of the membrane. Residues 351–371 (LLFLGVLTVLGTGFGAYNMAM) form a helical membrane-spanning segment. Topologically, residues 372–387 (AAMSPCPVLQGHWGGE) are extracellular. A disulfide bond links cysteine 377 and cysteine 454. Residues 388-408 (VLIVLSWVLFAACLSYVKVML) form a helical membrane-spanning segment. At 409 to 418 (GVILRDRSRS) the chain is on the cytoplasmic side. The chain crosses the membrane as a helical span at residues 419 to 439 (ALLWCGAAVQLGSLIGALLMF). At 440 to 460 (PLVNVLKLFSSADYCSLDCSV) the chain is on the extracellular side.

Belongs to the riboflavin transporter family. As to expression, within the small intestine, it is particularly expressed in the jujenum and the ileum. Almost negligible expression in the stomach, duodenum, and large intestine.

The protein localises to the cell membrane. It catalyses the reaction riboflavin(in) = riboflavin(out). Functionally, plasma membrane transporter mediating the uptake by cells of the water soluble vitamin B2/riboflavin that plays a key role in biochemical oxidation-reduction reactions of the carbohydrate, lipid, and amino acid metabolism. The polypeptide is Solute carrier family 52, riboflavin transporter, member 3 (Slc52a3) (Mus musculus (Mouse)).